We begin with the raw amino-acid sequence, 127 residues long: Large ribosomal subunit protein bL17 (127 aa).

The protein belongs to the bacterial ribosomal protein bL17 family. In terms of assembly, part of the 50S ribosomal subunit. Contacts protein L32.

The chain is Large ribosomal subunit protein bL17 from Pelobacter propionicus (strain DSM 2379 / NBRC 103807 / OttBd1).